The sequence spans 161 residues: uncharacterized protein (161 aa).

A signal peptide spans 1 to 27 (MKKIGLLFMLCLAALFTIGFPAQQADA).

The protein resides in the secreted. This is an uncharacterized protein from Bacillus subtilis (strain 168).